Reading from the N-terminus, the 896-residue chain is MTDVTIKALASEIQTSVDRLIQQFADAGIRKSADDSVTAQEKQTLLTHLNREHGSAPDKLTLQRKTRSTLNIPGTGGKSKSVQIEVRKKRTFVKRDPQEAERLAAEEQAQREAEEQARREAEEAAKREAQLKAEREAAEQAKREVADKAKREAAEKDKVSNQHTDEMTKTAQAEKIRRENEAAELKRKSEEEARRKLEEEARRVAEEARRMAEENEKNWSETSDSPEDSSDYHVTTSQHARQAEDDNDREVEGGRGRSRSSKAARPAKKGNKHAESKADREEARAAVRGGKGGKHRKGSALQQGFQKPAQAVNRDVIIGETITVGELANKMAVKGSQVIKAMMKLGAMATINQVIDQETAQLVAEEMGHKVILRRENELEEAVMSDRDTGAAAEPRAPVVTIMGHVDHGKTSLLDYIRSTKVASGEAGGITQHIGAYHVETDNGMITFLDTPGHAAFTSMRARGAQATDIVVLVVAADDGVMPQTIEAIQHAKAAQVPVVVAVNKIDKPEADPDRVKNELSQYGILPEEWGGESQFVHVSAKAGTGIDDLLDAILLQAEVLELKAVRNGMASGAVIESFLDKGRGPVATVLVREGTLHKGDIVLCGFEYGRVRAMRDELGREVLEAGPSIPVEILGLSGVPAAGDEVTVVRDEKKAREVALYRQGKFREVKLARQQKSKLENMFANMTEGEVHEVNIVLKADVQGSVEAISDSLLKLSTDEVKVKIIGSGVGGITETDATLAAASNAILVGFNVRADASARKVIEAESLDLRYYSVIYNLIDEVKAAMSGMLSPELKQQIIGLAEVRDVFKSPKFGAIAGCMVTEGTIKRHNPIRVLRDNVVIYEGELESLRRFKDDVNEVRNGMECGIGVKNYNDVRVGDMIEVFEIIEIQRSID.

Basic and acidic residues predominate over residues 93–219; sequence VKRDPQEAER…RMAEENEKNW (127 aa). The interval 93-307 is disordered; it reads VKRDPQEAER…GSALQQGFQK (215 aa). The span at 256–271 shows a compositional bias: basic residues; that stretch reads GRSRSSKAARPAKKGN. Over residues 272 to 285 the composition is skewed to basic and acidic residues; it reads KHAESKADREEARA. The tr-type G domain occupies 395–564; it reads PRAPVVTIMG…LLQAEVLELK (170 aa). Residues 404–411 are G1; that stretch reads GHVDHGKT. 404 to 411 contributes to the GTP binding site; it reads GHVDHGKT. The segment at 429 to 433 is G2; that stretch reads GITQH. The segment at 450–453 is G3; that stretch reads DTPG. GTP is bound by residues 450–454 and 504–507; these read DTPGH and NKID. A G4 region spans residues 504–507; that stretch reads NKID. The G5 stretch occupies residues 540 to 542; the sequence is SAK.

It belongs to the TRAFAC class translation factor GTPase superfamily. Classic translation factor GTPase family. IF-2 subfamily.

It localises to the cytoplasm. Functionally, one of the essential components for the initiation of protein synthesis. Protects formylmethionyl-tRNA from spontaneous hydrolysis and promotes its binding to the 30S ribosomal subunits. Also involved in the hydrolysis of GTP during the formation of the 70S ribosomal complex. This Klebsiella pneumoniae (strain 342) protein is Translation initiation factor IF-2.